The primary structure comprises 355 residues: Peptide chain release factor 1 (355 aa).

Position 233 is an N5-methylglutamine (Q233).

This sequence belongs to the prokaryotic/mitochondrial release factor family. Post-translationally, methylated by PrmC. Methylation increases the termination efficiency of RF1.

It localises to the cytoplasm. In terms of biological role, peptide chain release factor 1 directs the termination of translation in response to the peptide chain termination codons UAG and UAA. This is Peptide chain release factor 1 from Bacillus anthracis.